Here is a 746-residue protein sequence, read N- to C-terminus: NAD(P)H-quinone oxidoreductase subunit 5, chloroplastic (746 aa).

A run of 16 helical transmembrane segments spans residues 9–29 (YIIL…LLFV), 40–60 (WAFV…NLAI), 88–108 (LIDP…IMVL), 125–145 (FAYM…SNLI), 147–167 (IHIF…FWFT), 185–205 (GDFG…SLEF), 225–245 (FAIL…AQFP), 258–278 (TPIS…FLVA), 283–303 (LFIV…ITLL), 327–347 (LGYI…FHLI), 354–374 (ALLF…VGYS), 396–416 (TTFL…CFWS), 425–445 (WLYS…TAFY), 554–574 (LFPL…GIPF), 610–630 (IFSV…YGSV), and 726–746 (YLFL…YFDF).

This sequence belongs to the complex I subunit 5 family. In terms of assembly, NDH is composed of at least 16 different subunits, 5 of which are encoded in the nucleus.

The protein localises to the plastid. Its subcellular location is the chloroplast thylakoid membrane. The catalysed reaction is a plastoquinone + NADH + (n+1) H(+)(in) = a plastoquinol + NAD(+) + n H(+)(out). It carries out the reaction a plastoquinone + NADPH + (n+1) H(+)(in) = a plastoquinol + NADP(+) + n H(+)(out). Functionally, NDH shuttles electrons from NAD(P)H:plastoquinone, via FMN and iron-sulfur (Fe-S) centers, to quinones in the photosynthetic chain and possibly in a chloroplast respiratory chain. The immediate electron acceptor for the enzyme in this species is believed to be plastoquinone. Couples the redox reaction to proton translocation, and thus conserves the redox energy in a proton gradient. This is NAD(P)H-quinone oxidoreductase subunit 5, chloroplastic (ndhF) from Dioscorea elephantipes (Elephant's foot yam).